The primary structure comprises 288 residues: MEKYHGLEKIGEGTYGVVYKAQNSDGESFALKKIRLEKEDEGIPSTAIREISILKELRHSNIVKLYDVIHAKKRLILVFEHLDQDLKKLIDVCDGGLESVTAKSFLLQLLNGIAYCHEHRVLHRDLKPQNLLINREGELKIADFGLARAFGIPARRYTHEVVTLWYRAPDILMGSKKYSTPIDIWSVGCIFAEMVNGRPLFPGVSDTDQLMRIFKILGTPNSQNWPDVFKLPKYDPNFPVYEPLPWETFIKGLDDTGIDLLSKMLKLDPNQRITAKQAIEHPYFKETS.

In terms of domain architecture, Protein kinase spans tyrosine 4–phenylalanine 284. Residues isoleucine 10 to valine 18 and lysine 32 each bind ATP. Phosphothreonine is present on threonine 14. Phosphotyrosine is present on tyrosine 15. Aspartate 125 acts as the Proton acceptor in catalysis. Phosphothreonine is present on threonine 158.

Belongs to the protein kinase superfamily. CMGC Ser/Thr protein kinase family. CDC2/CDKX subfamily. May form a complex composed of at least the catalytic subunit CRK2 and a cyclin. The cofactor is Mg(2+).

It localises to the cytoplasm. It carries out the reaction L-seryl-[protein] + ATP = O-phospho-L-seryl-[protein] + ADP + H(+). The enzyme catalyses L-threonyl-[protein] + ATP = O-phospho-L-threonyl-[protein] + ADP + H(+). The catalysed reaction is [DNA-directed RNA polymerase] + ATP = phospho-[DNA-directed RNA polymerase] + ADP + H(+). With respect to regulation, phosphorylation at Thr-14 or Tyr-15 inactivates the enzyme, while phosphorylation at Thr-158 activates it. In terms of biological role, serine/threonine-protein kinase. Involved in the control of the cell cycle. Required for entry into S-phase and mitosis. Probable component of the kinase complex that phosphorylates the repetitive C-terminus of RNA polymerase II. The chain is Cyclin-dependent kinase 2 homolog from Plasmodium chabaudi chabaudi.